A 648-amino-acid chain; its full sequence is Biosynthetic arginine decarboxylase (648 aa).

Lysine 109 is subject to N6-(pyridoxal phosphate)lysine. 291-301 (IDVGGGLGIDF) contributes to the substrate binding site.

Belongs to the Orn/Lys/Arg decarboxylase class-II family. SpeA subfamily. Mg(2+) serves as cofactor. It depends on pyridoxal 5'-phosphate as a cofactor.

The catalysed reaction is L-arginine + H(+) = agmatine + CO2. Functionally, catalyzes the biosynthesis of agmatine from arginine. In Prochlorococcus marinus subsp. pastoris (strain CCMP1986 / NIES-2087 / MED4), this protein is Biosynthetic arginine decarboxylase.